We begin with the raw amino-acid sequence, 222 residues long: Histidine biosynthesis bifunctional protein HisIE (222 aa).

Positions 1 to 128 are phosphoribosyl-AMP cyclohydrolase; it reads MQPLSPAFID…SLTLPPPMDA (128 aa). The segment at 129-222 is phosphoribosyl-ATP pyrophosphohydrolase; sequence CSELFRVIDQ…ANRRGAPRRN (94 aa).

It in the N-terminal section; belongs to the PRA-CH family. In the C-terminal section; belongs to the PRA-PH family.

The protein resides in the cytoplasm. It catalyses the reaction 1-(5-phospho-beta-D-ribosyl)-ATP + H2O = 1-(5-phospho-beta-D-ribosyl)-5'-AMP + diphosphate + H(+). The enzyme catalyses 1-(5-phospho-beta-D-ribosyl)-5'-AMP + H2O = 1-(5-phospho-beta-D-ribosyl)-5-[(5-phospho-beta-D-ribosylamino)methylideneamino]imidazole-4-carboxamide. It functions in the pathway amino-acid biosynthesis; L-histidine biosynthesis; L-histidine from 5-phospho-alpha-D-ribose 1-diphosphate: step 2/9. The protein operates within amino-acid biosynthesis; L-histidine biosynthesis; L-histidine from 5-phospho-alpha-D-ribose 1-diphosphate: step 3/9. This is Histidine biosynthesis bifunctional protein HisIE from Prochlorococcus marinus (strain MIT 9313).